A 600-amino-acid chain; its full sequence is Aspartate--tRNA(Asp/Asn) ligase (600 aa).

Glutamate 174 lines the L-aspartate pocket. The aspartate stretch occupies residues 198-201 (QLFK). Residue arginine 220 participates in L-aspartate binding. Residues 220–222 (RDE) and glutamine 229 contribute to the ATP site. Position 457 (histidine 457) interacts with L-aspartate. Glutamate 491 contacts ATP. Arginine 498 contacts L-aspartate. Residue 543-546 (GLDR) coordinates ATP.

This sequence belongs to the class-II aminoacyl-tRNA synthetase family. Type 1 subfamily. As to quaternary structure, homodimer.

The protein resides in the cytoplasm. The catalysed reaction is tRNA(Asx) + L-aspartate + ATP = L-aspartyl-tRNA(Asx) + AMP + diphosphate. Functionally, aspartyl-tRNA synthetase with relaxed tRNA specificity since it is able to aspartylate not only its cognate tRNA(Asp) but also tRNA(Asn). Reaction proceeds in two steps: L-aspartate is first activated by ATP to form Asp-AMP and then transferred to the acceptor end of tRNA(Asp/Asn). The protein is Aspartate--tRNA(Asp/Asn) ligase of Burkholderia mallei (strain NCTC 10247).